The sequence spans 109 residues: Membrane-bound lysozyme inhibitor of C-type lysozyme (109 aa).

The N-terminal stretch at 1 to 17 (MTMKKLLIIILPVLLSG) is a signal peptide. A lipid anchor (N-palmitoyl cysteine) is attached at Cys18. Cys18 is lipidated: S-diacylglycerol cysteine. A disulfide bridge links Cys37 with Cys102.

The protein belongs to the MliC family. Type 1 subfamily. In terms of assembly, monomer.

Its subcellular location is the cell outer membrane. Specifically inhibits C-type lysozymes. This is Membrane-bound lysozyme inhibitor of C-type lysozyme from Escherichia coli (strain K12).